The chain runs to 326 residues: tRNA U34 carboxymethyltransferase (326 aa).

Lys-91, Trp-105, Lys-110, Gly-130, Met-196, Tyr-200, and Arg-315 together coordinate carboxy-S-adenosyl-L-methionine.

It belongs to the class I-like SAM-binding methyltransferase superfamily. CmoB family. Homotetramer.

The enzyme catalyses carboxy-S-adenosyl-L-methionine + 5-hydroxyuridine(34) in tRNA = 5-carboxymethoxyuridine(34) in tRNA + S-adenosyl-L-homocysteine + H(+). Catalyzes carboxymethyl transfer from carboxy-S-adenosyl-L-methionine (Cx-SAM) to 5-hydroxyuridine (ho5U) to form 5-carboxymethoxyuridine (cmo5U) at position 34 in tRNAs. The sequence is that of tRNA U34 carboxymethyltransferase from Tolumonas auensis (strain DSM 9187 / NBRC 110442 / TA 4).